A 450-amino-acid polypeptide reads, in one-letter code: IMP-specific 5'-nucleotidase 1 (450 aa).

His144 contributes to the ATP binding site. The active-site Nucleophile is Asp172. IMP-binding residues include Asp172, Asp174, Asp180, Thr208, Asp376, and Lys384. Mg(2+) contacts are provided by Asp172 and Asp174. Residue Asp174 is the Proton donor of the active site. Asp411 contacts Mg(2+).

Belongs to the ISN1 family. As to quaternary structure, homotetramer. Mg(2+) is required as a cofactor.

The catalysed reaction is IMP + H2O = inosine + phosphate. Its activity is regulated as follows. Allosterically activated by ATP. ATP binding is a prerequisite to magnesium and substrate binding. ATP binds to 2 of the subunits in the homotetramer inducing a closure of these 2 subunits and the release of the C-terminal loop, thereby activating the enzyme. IMP-specific 5'-nucleotidase involved in IMP (inosine 5'-phosphate) degradation. The polypeptide is IMP-specific 5'-nucleotidase 1 (ISN1) (Saccharomyces cerevisiae (strain ATCC 204508 / S288c) (Baker's yeast)).